The following is a 453-amino-acid chain: Glutamyl-tRNA reductase (453 aa).

Residues 54 to 57 (TCNR), serine 113, 118 to 120 (EAQ), and glutamine 124 contribute to the substrate site. Catalysis depends on cysteine 55, which acts as the Nucleophile. 193–198 (GGGEVS) provides a ligand contact to NADP(+).

This sequence belongs to the glutamyl-tRNA reductase family. In terms of assembly, homodimer.

It catalyses the reaction (S)-4-amino-5-oxopentanoate + tRNA(Glu) + NADP(+) = L-glutamyl-tRNA(Glu) + NADPH + H(+). It participates in porphyrin-containing compound metabolism; protoporphyrin-IX biosynthesis; 5-aminolevulinate from L-glutamyl-tRNA(Glu): step 1/2. The protein operates within porphyrin-containing compound metabolism; chlorophyll biosynthesis. Its function is as follows. Catalyzes the NADPH-dependent reduction of glutamyl-tRNA(Glu) to glutamate 1-semialdehyde (GSA). The chain is Glutamyl-tRNA reductase from Chloroflexus aggregans (strain MD-66 / DSM 9485).